The chain runs to 994 residues: Translation initiation factor IF-2 (994 aa).

Composition is skewed to polar residues over residues 1 to 10 and 28 to 40; these read MSDENNNGRN and SVSSGTVKQSFSH. The disordered stretch occupies residues 1–405; the sequence is MSDENNNGRN…REKRKGGAQE (405 aa). The span at 76–91 shows a compositional bias: low complexity; sequence PQKPAGPAQAPRAPQG. Residues 98–131 show a composition bias toward basic and acidic residues; that stretch reads AEERAARQRAIELARQQEADRRAREERARAEAEA. Residues 132 to 146 are compositionally biased toward low complexity; the sequence is ARAAQQKAAQAAAEP. Residues 147–157 are compositionally biased toward pro residues; sequence PAAPPPAPAAP. Over residues 158 to 172 the composition is skewed to low complexity; the sequence is PAAAAPAAPAAEAAP. Residues 173 to 188 are compositionally biased toward pro residues; the sequence is APKPAPSPRPVPPSAP. A compositionally biased stretch (low complexity) spans 189–204; sequence APQAARPAAEAPPRQA. 2 stretches are compositionally biased toward basic and acidic residues: residues 216–235 and 247–273; these read PDRRDDRPSTTTYRPERPSN and PRRDDDRGPRPPRRDDDRGPRRDDRPQ. Over residues 298-310 the composition is skewed to gly residues; the sequence is RGPGGPRGPGGPR. 2 stretches are compositionally biased toward basic and acidic residues: residues 336–350 and 390–402; these read VDRRPDEDDRRRDPG and RAREREREKRKGG. In terms of domain architecture, tr-type G spans 492–662; the sequence is PRPPVVAVMG…LLQAEVLDLK (171 aa). Residues 501–508 form a G1 region; it reads GHVDHGKT. GTP is bound at residue 501–508; it reads GHVDHGKT. A G2 region spans residues 526–530; it reads GITQH. The tract at residues 548–551 is G3; that stretch reads DTPG. Residues 548–552 and 602–605 each bind GTP; these read DTPGH and NKID. The G4 stretch occupies residues 602–605; the sequence is NKID. Residues 638–640 form a G5 region; that stretch reads SAT.

It belongs to the TRAFAC class translation factor GTPase superfamily. Classic translation factor GTPase family. IF-2 subfamily.

It is found in the cytoplasm. Functionally, one of the essential components for the initiation of protein synthesis. Protects formylmethionyl-tRNA from spontaneous hydrolysis and promotes its binding to the 30S ribosomal subunits. Also involved in the hydrolysis of GTP during the formation of the 70S ribosomal complex. This chain is Translation initiation factor IF-2, found in Phenylobacterium zucineum (strain HLK1).